The primary structure comprises 465 residues: MTIKIHNTLSNKKEEFYPQRGNFVSMYVCGITPYDEVHLGHARVYVVFDIVKRHLLRRGYIVKHIQNFTDVDDKIVKRSQEKNMKPSELAQIYIEDYFVQAGRLNILKAEKYPCVTQMIPEIVNFIKELVNKGLAYEIGGDIYFSVEKFKDYGKLSKRNLKDLRAGARVGVCNGKNSAFDFALWKKTKENEPREVTWESPWGKGRPGWHIECSAMSSELLGDTIDIHGGGQDLIFPHHENEIAQSEAKTGKKFVKYWIHNGFVTINKEKMSKSLNNFFTLKAIFEKYNPRVVRYYLLTQHYSSPLDFSDAGIESARNTLQGMDGTYLRLISSVKESDVEITDKDLSDLQGNFLSALDDDFNSEKALSYLHELKGLISKGLLTAGRERLSQLKKLFEDFAGTSLGILLPEEQNADESLQNLLKERNDARKNKNWAESDRVRKLIIDERGYKIFDNKDGSSLLVKKV.

Cys-29 contributes to the Zn(2+) binding site. The 'HIGH' region motif lies at 31–41; sequence ITPYDEVHLGH. 3 residues coordinate Zn(2+): Cys-212, His-237, and Glu-241. A 'KMSKS' region motif is present at residues 269-273; it reads KMSKS. Lys-272 lines the ATP pocket.

This sequence belongs to the class-I aminoacyl-tRNA synthetase family. Monomer. The cofactor is Zn(2+).

Its subcellular location is the cytoplasm. The catalysed reaction is tRNA(Cys) + L-cysteine + ATP = L-cysteinyl-tRNA(Cys) + AMP + diphosphate. The protein is Cysteine--tRNA ligase of Endomicrobium trichonymphae.